Here is a 428-residue protein sequence, read N- to C-terminus: Maltoporin 1 (428 aa).

A signal peptide spans 1 to 25; it reads MTMKVKLLTTSVALALSMTAFSSNA.

It belongs to the porin LamB (TC 1.B.3) family. In terms of assembly, homotrimer formed of three 18-stranded antiparallel beta-barrels, containing three independent channels.

The protein resides in the cell outer membrane. The catalysed reaction is beta-maltose(in) = beta-maltose(out). Functionally, involved in the transport of maltose and maltodextrins. The polypeptide is Maltoporin 1 (Aeromonas salmonicida (strain A449)).